Reading from the N-terminus, the 446-residue chain is tRNA modification GTPase MnmE (446 aa).

The (6S)-5-formyl-5,6,7,8-tetrahydrofolate site is built by R24, E81, and K120. The 153-residue stretch at 216 to 368 folds into the TrmE-type G domain; it reads GLHAVLIGPP…LHTRLRELAL (153 aa). N226 contributes to the K(+) binding site. Residues 226 to 231, 245 to 251, and 270 to 273 each bind GTP; these read NAGKSS, TDVAGTT, and DTAG. Mg(2+) is bound at residue S230. The K(+) site is built by T245, V247, and T250. A Mg(2+)-binding site is contributed by T251. K446 contributes to the (6S)-5-formyl-5,6,7,8-tetrahydrofolate binding site.

This sequence belongs to the TRAFAC class TrmE-Era-EngA-EngB-Septin-like GTPase superfamily. TrmE GTPase family. In terms of assembly, homodimer. Heterotetramer of two MnmE and two MnmG subunits. Requires K(+) as cofactor.

The protein resides in the cytoplasm. In terms of biological role, exhibits a very high intrinsic GTPase hydrolysis rate. Involved in the addition of a carboxymethylaminomethyl (cmnm) group at the wobble position (U34) of certain tRNAs, forming tRNA-cmnm(5)s(2)U34. This Xanthomonas campestris pv. campestris (strain B100) protein is tRNA modification GTPase MnmE.